A 261-amino-acid chain; its full sequence is Imidazole glycerol phosphate synthase subunit HisF (261 aa).

Catalysis depends on residues Asp-12 and Asp-131.

Belongs to the HisA/HisF family. Heterodimer of HisH and HisF.

It localises to the cytoplasm. It carries out the reaction 5-[(5-phospho-1-deoxy-D-ribulos-1-ylimino)methylamino]-1-(5-phospho-beta-D-ribosyl)imidazole-4-carboxamide + L-glutamine = D-erythro-1-(imidazol-4-yl)glycerol 3-phosphate + 5-amino-1-(5-phospho-beta-D-ribosyl)imidazole-4-carboxamide + L-glutamate + H(+). The protein operates within amino-acid biosynthesis; L-histidine biosynthesis; L-histidine from 5-phospho-alpha-D-ribose 1-diphosphate: step 5/9. In terms of biological role, IGPS catalyzes the conversion of PRFAR and glutamine to IGP, AICAR and glutamate. The HisF subunit catalyzes the cyclization activity that produces IGP and AICAR from PRFAR using the ammonia provided by the HisH subunit. This chain is Imidazole glycerol phosphate synthase subunit HisF, found in Brucella abortus (strain S19).